The following is a 318-amino-acid chain: Cuticle collagen dpy-7 (318 aa).

Triple-helical region regions lie at residues 101-130 (GPIG…DGLD), 147-206 (GPPG…PGDD), 209-235 (GGTG…NGLP), and 240-278 (GPPG…PGGH). The disordered stretch occupies residues 101–318 (GPIGPPGVSG…GYSGGGYGKK (218 aa)). Positions 187-204 (PQGEPGEQGEPGIKGPPG) are enriched in low complexity. Composition is skewed to pro residues over residues 216-228 (PPGP…PKGP) and 250-268 (PPGP…PFGP). Over residues 309 to 318 (GYSGGGYGKK) the composition is skewed to gly residues.

Belongs to the cuticular collagen family. In terms of assembly, collagen polypeptide chains are complexed within the cuticle by disulfide bonds and other types of covalent cross-links.

In terms of biological role, nematode cuticles are composed largely of collagen-like proteins. The cuticle functions both as an exoskeleton and as a barrier to protect the worm from its environment. Mutations in dpy-7 affects the body shape. This Caenorhabditis elegans protein is Cuticle collagen dpy-7 (dpy-7).